Consider the following 619-residue polypeptide: Protein DFG16 (619 aa).

M1 is a topological domain (extracellular). A helical membrane pass occupies residues 2-22; it reads IIRLHFYYLLTLVYHLGLVGA. The Cytoplasmic portion of the chain corresponds to 23–167; the sequence is YEKAARKRIQ…KDPFPLGMIM (145 aa). The segment at 33–54 is disordered; sequence PPDLIPGPPGHKLGDERPPHYD. The segment covering 44–54 has biased composition (basic and acidic residues); it reads KLGDERPPHYD. The chain crosses the membrane as a helical span at residues 168-188; the sequence is ITFASGCICVATWMLFLVVLL. Residues 189 to 203 are Extracellular-facing; the sequence is LPSDNHNRRNKVVHV. A helical membrane pass occupies residues 204-224; the sequence is YVLFSAIIRTVFLNETIAVIF. Residues 225–291 are Cytoplasmic-facing; it reads DSQYHDDYQD…IPFKMKKGTH (67 aa). The chain crosses the membrane as a helical span at residues 292-312; it reads IIITVGCFLSLADNILFANLL. Over 313–321 the chain is Extracellular; the sequence is WRKNLVVLK. Residues 322 to 342 traverse the membrane as a helical segment; that stretch reads VFYKLIELLIYTIFISIICYF. At 343 to 378 the chain is on the cytoplasmic side; sequence TWHNFAYILLPKTAEINTDGKCKTKLRILWENYHET. The helical transmembrane segment at 379 to 399 threads the bilayer; that stretch reads IPLLAYNILIFILFYFTTIFF. At 400–410 the chain is on the extracellular side; sequence AAFTKHVRGWT. A helical membrane pass occupies residues 411–431; that stretch reads FNFVHLLKVLITVNVWGLIGV. The Cytoplasmic portion of the chain corresponds to 432 to 619; it reads LEKRELHISK…NHIYNYENSD (188 aa). 2 stretches are compositionally biased toward polar residues: residues 485-504 and 526-549; these read KSNT…SPTW and KFGQ…TLSK. Disordered stretches follow at residues 485 to 506 and 520 to 586; these read KSNT…TWKS and IMKS…ADKH. Positions 552 to 561 are enriched in basic residues; that stretch reads QLLRKPRRKT.

Its subcellular location is the membrane. Its function is as follows. Involved in invasion during filamentous growth. In Saccharomyces cerevisiae (strain ATCC 204508 / S288c) (Baker's yeast), this protein is Protein DFG16 (DFG16).